The sequence spans 213 residues: MOB kinase activator-like 1 homolog A (213 aa).

Positions 77, 82, 159, and 164 each coordinate Zn(2+).

This sequence belongs to the MOB1/phocein family.

This chain is MOB kinase activator-like 1 homolog A (mobA), found in Dictyostelium discoideum (Social amoeba).